The chain runs to 196 residues: MINKIYGKVIEKKESSLVLMTAVFEFELLVSAFCLANFKLLDKVELFTYLYTKENELKLFGFLNSDERETFKSLIGVSGIGPRAALRVLSNIRYNEFKDAIDREDIELIAKIKGIGKKMAGKMFLHLQGKLLINNELESSLFRFKELEESIVSMGFDRKIVNSKLKEAFNLVEFSNLKDSEKEQFLFKEVLKRMSN.

Positions 1-63 (MINKIYGKVI…ENELKLFGFL (63 aa)) are domain I. The tract at residues 64–139 (NSDERETFKS…KLLINNELES (76 aa)) is domain II. A region of interest (flexible linker) is located at residue serine 139. The interval 139 to 196 (SSLFRFKELEESIVSMGFDRKIVNSKLKEAFNLVEFSNLKDSEKEQFLFKEVLKRMSN) is domain III.

It belongs to the RuvA family. Homotetramer. Forms an RuvA(8)-RuvB(12)-Holliday junction (HJ) complex. HJ DNA is sandwiched between 2 RuvA tetramers; dsDNA enters through RuvA and exits via RuvB. An RuvB hexamer assembles on each DNA strand where it exits the tetramer. Each RuvB hexamer is contacted by two RuvA subunits (via domain III) on 2 adjacent RuvB subunits; this complex drives branch migration. In the full resolvosome a probable DNA-RuvA(4)-RuvB(12)-RuvC(2) complex forms which resolves the HJ.

The protein resides in the cytoplasm. Functionally, the RuvA-RuvB-RuvC complex processes Holliday junction (HJ) DNA during genetic recombination and DNA repair, while the RuvA-RuvB complex plays an important role in the rescue of blocked DNA replication forks via replication fork reversal (RFR). RuvA specifically binds to HJ cruciform DNA, conferring on it an open structure. The RuvB hexamer acts as an ATP-dependent pump, pulling dsDNA into and through the RuvAB complex. HJ branch migration allows RuvC to scan DNA until it finds its consensus sequence, where it cleaves and resolves the cruciform DNA. The sequence is that of Holliday junction branch migration complex subunit RuvA from Borreliella afzelii (strain PKo) (Borrelia afzelii).